A 458-amino-acid chain; its full sequence is Protein adenylyltransferase FICD (458 aa).

At 1 to 23 (MMLIPMASVMAVTEPKWVSVWSR) the chain is on the cytoplasmic side. A helical; Signal-anchor for type II membrane protein membrane pass occupies residues 24–44 (FLWVTLLSMVLGSLLALLLPL). At 45 to 458 (GAVEEQCLAV…GFKETLPVKP (414 aa)) the chain is on the lumenal side. Ser79 is subject to O-AMP-serine; by autocatalysis. Residue Thr80 is modified to O-AMP-threonine; by autocatalysis. TPR repeat units lie at residues 106 to 139 (ARAALNQALEMKRQGKREKAQKLFMHALKMDPDF) and 140 to 173 (VDALTEFGIFSEEDKDIIQADYLYTRALTISPYH). O-AMP-threonine; by autocatalysis is present on Thr183. The Inhibitory (S/T)XXXE(G/N) motif signature appears at 230-235 (TVAIEG). Glu234 lines the ATP pocket. The N-linked (GlcNAc...) asparagine glycan is linked to Asn275. Residues 285-420 (VTISDVLEIH…VRPFIRFIAK (136 aa)) enclose the Fido domain. 316–319 (VGHH) serves as a coordination point for ATP. Residue His363 is part of the active site. ATP-binding positions include 367-374 (DGNGRTSR), 399-400 (YY), and Asn407. Residue Asn446 is glycosylated (N-linked (GlcNAc...) asparagine).

This sequence belongs to the fic family. In terms of assembly, homodimer. Interacts with HD. Requires Mg(2+) as cofactor. Mn(2+) serves as cofactor. In terms of processing, auto-AMPylated in vitro; it is unclear whether auto-AMPylation is relevant in vivo. Post-translationally, N-glycosylated; predominantly glycosylated at Asn-275. In terms of tissue distribution, ubiquitous.

The protein localises to the endoplasmic reticulum membrane. It catalyses the reaction L-tyrosyl-[protein] + ATP = O-(5'-adenylyl)-L-tyrosyl-[protein] + diphosphate. It carries out the reaction 3-O-(5'-adenylyl)-L-threonyl-[protein] + H2O = L-threonyl-[protein] + AMP + H(+). The catalysed reaction is L-threonyl-[protein] + ATP = 3-O-(5'-adenylyl)-L-threonyl-[protein] + diphosphate. With respect to regulation, the side chain of Glu-234 determines which of the two opposing activities (AMPylase or de-AMPylase) will take place. In response to endoplasmic reticulum stress, mediates de-AMPylase activity. Adenylyltransferase activity is inhibited by the inhibitory helix present at the N-terminus: Glu-234 binds ATP and competes with ATP-binding at Arg-374, thereby preventing adenylyltransferase activity. In unstressed cells, disengagement of Glu-234 promotes adenylyltransferase activity. Activation dissociates ATP-binding from Glu-234, allowing ordered binding of the entire ATP moiety with the alpha-phosphate in an orientation that is productive for accepting an incoming target hydroxyl side chain. Its function is as follows. Protein that can both mediate the addition of adenosine 5'-monophosphate (AMP) to specific residues of target proteins (AMPylation), and the removal of the same modification from target proteins (de-AMPylation), depending on the context. The side chain of Glu-231 determines which of the two opposing activities (AMPylase or de-AMPylase) will take place. Acts as a key regulator of the ERN1/IRE1-mediated unfolded protein response (UPR) by mediating AMPylation or de-AMPylation of HSPA5/BiP. In unstressed cells, acts as an adenylyltransferase by mediating AMPylation of HSPA5/BiP at 'Thr-518', thereby inactivating it. In response to endoplasmic reticulum stress, acts as a phosphodiesterase by mediating removal of ATP (de-AMPylation) from HSPA5/BiP at 'Thr-518', leading to restore HSPA5/BiP activity. Although it is able to AMPylate RhoA, Rac and Cdc42 Rho GTPases in vitro, Rho GTPases do not constitute physiological substrates. The protein is Protein adenylyltransferase FICD of Homo sapiens (Human).